Reading from the N-terminus, the 120-residue chain is Large ribosomal subunit protein bL17 (120 aa).

It belongs to the bacterial ribosomal protein bL17 family. Part of the 50S ribosomal subunit. Contacts protein L32.

This Mycoplasmopsis pulmonis (strain UAB CTIP) (Mycoplasma pulmonis) protein is Large ribosomal subunit protein bL17.